The chain runs to 296 residues: Small ribosomal subunit protein uS2m (296 aa).

The disordered stretch occupies residues 274-296; that stretch reads QGQKEPGDQGPAHPPGADMSHSL.

It belongs to the universal ribosomal protein uS2 family. As to quaternary structure, component of the mitochondrial small ribosomal subunit (mt-SSU). Mature mammalian 55S mitochondrial ribosomes consist of a small (28S) and a large (39S) subunit. The 28S small subunit contains a 12S ribosomal RNA (12S mt-rRNA) and 30 different proteins. The 39S large subunit contains a 16S rRNA (16S mt-rRNA), a copy of mitochondrial valine transfer RNA (mt-tRNA(Val)), which plays an integral structural role, and 52 different proteins.

It is found in the mitochondrion. Required for mitoribosome formation and stability, and mitochondrial translation. The polypeptide is Small ribosomal subunit protein uS2m (MRPS2) (Homo sapiens (Human)).